The primary structure comprises 130 residues: Albumin-1 A (130 aa).

The signal sequence occupies residues Met1–Ala26. Cystine bridges form between Cys29–Cys46, Cys33–Cys48, and Cys41–Cys58. 2 consecutive propeptides follow at residues Val64 to Asn69 and Leu123 to Ala130.

The C-terminal glycine may be removed from PA1b. Major component of both the cotyledons and embryonic axes of mature seeds.

PA1b binds to basic 7S globulin (BG) and stimulates its phosphorylation activity. Involved in the signal transduction system to regulate the growth and differentiation as a hormone peptide. Toxic to various insects through binding to a high affinity binding site in the insect gut. In Pisum sativum (Garden pea), this protein is Albumin-1 A.